The chain runs to 163 residues: Nucleotide-binding protein HDEF_1968 (163 aa).

Belongs to the YajQ family.

Functionally, nucleotide-binding protein. The protein is Nucleotide-binding protein HDEF_1968 of Hamiltonella defensa subsp. Acyrthosiphon pisum (strain 5AT).